A 429-amino-acid chain; its full sequence is Adenylosuccinate synthetase (429 aa).

Residues glycine 12 to lysine 18 and glycine 40 to threonine 42 each bind GTP. Aspartate 13 acts as the Proton acceptor in catalysis. Mg(2+)-binding residues include aspartate 13 and glycine 40. Residues aspartate 13 to lysine 16, asparagine 38 to histidine 41, threonine 128, arginine 142, glutamine 223, threonine 238, and arginine 302 contribute to the IMP site. Histidine 41 functions as the Proton donor in the catalytic mechanism. Position 298–304 (valine 298–arginine 304) interacts with substrate. GTP is bound by residues arginine 304, lysine 330–aspartate 332, and glycine 412–glycine 414.

It belongs to the adenylosuccinate synthetase family. In terms of assembly, homodimer. Requires Mg(2+) as cofactor.

The protein resides in the cytoplasm. It catalyses the reaction IMP + L-aspartate + GTP = N(6)-(1,2-dicarboxyethyl)-AMP + GDP + phosphate + 2 H(+). It participates in purine metabolism; AMP biosynthesis via de novo pathway; AMP from IMP: step 1/2. Plays an important role in the de novo pathway of purine nucleotide biosynthesis. Catalyzes the first committed step in the biosynthesis of AMP from IMP. This chain is Adenylosuccinate synthetase, found in Micrococcus luteus (strain ATCC 4698 / DSM 20030 / JCM 1464 / CCM 169 / CCUG 5858 / IAM 1056 / NBRC 3333 / NCIMB 9278 / NCTC 2665 / VKM Ac-2230) (Micrococcus lysodeikticus).